A 516-amino-acid polypeptide reads, in one-letter code: Glucose-1-phosphate adenylyltransferase large subunit 1, chloroplastic/amyloplastic (516 aa).

A chloroplast-targeting transit peptide spans 1 to 45 (MQFALALDTNSGPHQIRSCEGDGIDRLEKLSIGGRKQEKALRNRC).

The protein belongs to the bacterial/plant glucose-1-phosphate adenylyltransferase family. Heterotetramer. As to expression, endosperm.

Its subcellular location is the plastid. The protein resides in the chloroplast. It is found in the amyloplast. The catalysed reaction is alpha-D-glucose 1-phosphate + ATP + H(+) = ADP-alpha-D-glucose + diphosphate. It participates in glycan biosynthesis; starch biosynthesis. Activated by 3'phosphoglycerate, inhibited by orthophosphate. Allosteric regulation. Functionally, this protein plays a role in synthesis of starch. It catalyzes the synthesis of the activated glycosyl donor, ADP-glucose from Glc-1-P and ATP. The chain is Glucose-1-phosphate adenylyltransferase large subunit 1, chloroplastic/amyloplastic (SH2) from Zea mays (Maize).